We begin with the raw amino-acid sequence, 336 residues long: Protein-glutamate methylesterase/protein-glutamine glutaminase 3 (336 aa).

The 118-residue stretch at 2–119 (KIAIVNDMPM…PNPREAAAPL (118 aa)) folds into the Response regulatory domain. 4-aspartylphosphate is present on Asp-53. The CheB-type methylesterase domain occupies 147-336 (VSRRDRLVAI…APRLMEVFTQ (190 aa)). Catalysis depends on residues Ser-159, His-186, and Asp-279.

Belongs to the CheB family. Phosphorylated by CheA. Phosphorylation of the N-terminal regulatory domain activates the methylesterase activity.

Its subcellular location is the cytoplasm. It carries out the reaction [protein]-L-glutamate 5-O-methyl ester + H2O = L-glutamyl-[protein] + methanol + H(+). The catalysed reaction is L-glutaminyl-[protein] + H2O = L-glutamyl-[protein] + NH4(+). Functionally, involved in chemotaxis. Part of a chemotaxis signal transduction system that modulates chemotaxis in response to various stimuli. Catalyzes the demethylation of specific methylglutamate residues introduced into the chemoreceptors (methyl-accepting chemotaxis proteins or MCP) by CheR. Also mediates the irreversible deamidation of specific glutamine residues to glutamic acid. In Pseudomonas syringae pv. tomato (strain ATCC BAA-871 / DC3000), this protein is Protein-glutamate methylesterase/protein-glutamine glutaminase 3.